The following is a 202-amino-acid chain: FMN-dependent NADH:quinone oxidoreductase (202 aa).

FMN contacts are provided by residues Ser-10, 16 to 18 (SHS), and 96 to 99 (MYNF).

The protein belongs to the azoreductase type 1 family. In terms of assembly, homodimer. Requires FMN as cofactor.

It carries out the reaction 2 a quinone + NADH + H(+) = 2 a 1,4-benzosemiquinone + NAD(+). The enzyme catalyses N,N-dimethyl-1,4-phenylenediamine + anthranilate + 2 NAD(+) = 2-(4-dimethylaminophenyl)diazenylbenzoate + 2 NADH + 2 H(+). Its function is as follows. Quinone reductase that provides resistance to thiol-specific stress caused by electrophilic quinones. Also exhibits azoreductase activity. Catalyzes the reductive cleavage of the azo bond in aromatic azo compounds to the corresponding amines. The polypeptide is FMN-dependent NADH:quinone oxidoreductase (Hydrogenovibrio crunogenus (strain DSM 25203 / XCL-2) (Thiomicrospira crunogena)).